The primary structure comprises 1246 residues: MSKTITKKVNKKTKKSTKINPKKLAKKPIIKSIDKPTNLTDVDFDKLIHTVETSTKRHFIAIEFNKKPVNNIANLGAKVNQKARLERSGEYYGIGVEILETIRPLLTNRLIIKILKLLKQENLTSPLKILDLNSLDELHYVLHCWLENATTVYDDCLNSYDKSYPEYDQWIRTVRSDPLNCKVRLTEIGFNEKTGGSVVPADWIDGEFDSGISLHKEMDKLETRIGKPPATYAIIHSMMIQKQDSIIEDITNTKFDYLFYVDLIDNKLVSKLVSKIRKKPYQYVKYDNTIIGFCLEDILTTKSQNNKKPREVGLYVSRLQKSIRRGRFGSQIMRETIDAINESPNYNLPEHGFMRVSASKQLVWRLFISILEDCRPYVTSGNELSLLDLILLVLITQKCLEYKFTDNLLELIKVTALMAQYNDTKSDLFDWRKFTESIKTPINPKSDYHTAISLALGNVIMMSGDTRMLKKLYSVNLVFKEFKRPKCNSLLELTSSNFKLTDQDTYQDIMLTSIDHHCKPNIILYYQACIPVSLTTREISSYIWKISSSYNIRSGKTQNNIDQVLRLVQNFLLEKSTKVSNEINNTFLNYSCNEIEPDNKTRRTSFLILFGSKYKFGGKDVMLAGTKKNPVKIKTKNEWVYSKDMAVINAYPKKYIYTKYLDPPFGFKWTKPKFWTEIIDGKPYVDGTNVDFFDGSIALKSITPLVTKKCNKYTTSLITTFFSGLDIELESILDVRNKSKPQIVNWVNTIDLNDIDLELVRCTYTKIFNQFNNTIMIGPCDRSGNKMHNSINYKLEGKLWAIFNLLHYLYPKTINPNSALNFSLNRSTQGYIHLIKSLEQLLFVGKNITGLVPTISTKLWDHQQETVNTMVAKFTDGYHGFGDASDVGSGKTLTSLALASKLINTINDIHSGILVLLPGNKLIVTWQDEIDKHTKNFDVKLHKPSGDIGKIKRNTIVISTMGRQRDNPINHKWLLVIIDECLSVQNKNALQTEQAFIQSLLAKYLVMMSATFFRTRFDKLYYMLKMLQTGLPERKQYLETILAESIVAKVPLSGMKWTTNIIHFQLNSLTRELYNKIIDKDLSVEAKYAKLNSLLVNNKEVNNMVVKQLSKLIAELTKQGCKCLIYARSQDEAKLWSNNLKIPIYPKKGDHCIVTYHDGTYGLNDLVIYNTIVMRPPTPDSLPQIKGRLARPGQKNNNLRIEYFVLEDTIEEGLLIRLEIASKFVHQYIMPLAKFYNISVNHQKYK.

Residues 1–21 (MSKTITKKVNKKTKKSTKINP) are disordered. Residues 872-1030 (AKFTDGYHGF…YYMLKMLQTG (159 aa)) form the Helicase ATP-binding domain. ATP is bound at residue 885-892 (SDVGSGKT).

The chain is Putative helicase L115 from Acanthamoeba polyphaga (Amoeba).